Here is a 231-residue protein sequence, read N- to C-terminus: dTTP/UTP pyrophosphatase (231 aa).

Catalysis depends on D85, which acts as the Proton acceptor.

It belongs to the Maf family. YhdE subfamily. A divalent metal cation is required as a cofactor.

The protein resides in the cytoplasm. The enzyme catalyses dTTP + H2O = dTMP + diphosphate + H(+). It carries out the reaction UTP + H2O = UMP + diphosphate + H(+). Its function is as follows. Nucleoside triphosphate pyrophosphatase that hydrolyzes dTTP and UTP. May have a dual role in cell division arrest and in preventing the incorporation of modified nucleotides into cellular nucleic acids. In Psychrobacter arcticus (strain DSM 17307 / VKM B-2377 / 273-4), this protein is dTTP/UTP pyrophosphatase.